The chain runs to 393 residues: Adaptive-response sensory kinase SasA (393 aa).

In terms of domain architecture, Histidine kinase spans 171–393 (MLAHDLRSPL…CFHFTLPVFR (223 aa)). The residue at position 174 (His-174) is a Phosphohistidine; by autocatalysis.

In terms of assembly, homooligomerizes. Interacts with KaiC. Participates in the KaiABC clock complex, whose core is composed of a KaiC homohexamer, 6 KaiB and up to 6 KaiA dimers. SasA and KaiB(fs) compete to bind to KaiC.

It carries out the reaction ATP + protein L-histidine = ADP + protein N-phospho-L-histidine.. Member of the two-component regulatory system SasA/RpaA involved in genome-wide circadian gene expression. One of several clock output pathways. Participates in the Kai clock protein complex, the main circadian regulator in cyanobacteria, via its interaction with KaiC. KaiC enhances the autophosphorylation activity of SasA, which then transfers its phosphate group to RpaA to activate it. In addition to its output function, recruits fold-shifted KaiB (KaiB(fs)) to KaiC to cooperatively form the KaiB(6):KaiC(6) complex (independent of SasA kinase activity). Required for robustness of the circadian rhythm of gene expression and is involved in clock output, also required for adaptation to light/dark cycles. The protein is Adaptive-response sensory kinase SasA of Gloeothece citriformis (strain PCC 7424) (Cyanothece sp. (strain PCC 7424)).